We begin with the raw amino-acid sequence, 751 residues long: Proton-associated sugar transporter A (751 aa).

Helical transmembrane passes span 93–113, 123–143, 155–175, 191–211, 233–253, and 268–288; these read ILFG…PVLL, SLVW…LGAW, RPFI…LLNG, WGIL…DSAD, IHAL…GIHW, and VIYV…LISI. Thr-500 carries the phosphothreonine modification. A run of 6 helical transmembrane segments spans residues 536 to 556, 576 to 596, 606 to 626, 630 to 650, 688 to 708, and 710 to 730; these read GWLS…EVVF, VTMG…YSAI, VRTL…LATL, LYVV…LCTL, FLAQ…VGSA, and GVMY…SLCV.

This sequence belongs to the glycoside-pentoside-hexuronide (GPH) cation symporter transporter (TC 2.A.2) family.

The protein localises to the membrane. The enzyme catalyses D-galactose(in) + H(+)(in) = D-galactose(out) + H(+)(out). The catalysed reaction is D-glucose(out) + H(+)(out) = D-glucose(in) + H(+)(in). In terms of biological role, proton-associated glucose transporter in the brain. The chain is Proton-associated sugar transporter A from Mus musculus (Mouse).